The sequence spans 173 residues: Shikimate kinase 1 (173 aa).

ATP is bound at residue 14–19 (GAGKST). Serine 18 provides a ligand contact to Mg(2+). Substrate contacts are provided by aspartate 36, arginine 60, and glycine 82. Arginine 120 contributes to the ATP binding site. Arginine 140 is a binding site for substrate. Position 157 (glutamine 157) interacts with ATP.

Belongs to the shikimate kinase family. Monomer. The cofactor is Mg(2+).

The protein resides in the cytoplasm. It carries out the reaction shikimate + ATP = 3-phosphoshikimate + ADP + H(+). It participates in metabolic intermediate biosynthesis; chorismate biosynthesis; chorismate from D-erythrose 4-phosphate and phosphoenolpyruvate: step 5/7. Catalyzes the specific phosphorylation of the 3-hydroxyl group of shikimic acid using ATP as a cosubstrate. The protein is Shikimate kinase 1 of Erwinia tasmaniensis (strain DSM 17950 / CFBP 7177 / CIP 109463 / NCPPB 4357 / Et1/99).